The chain runs to 128 residues: MARVHIWPQHTAVNPRLLENQARAMIHHHLMAATPAVFLVSSGPDGSQAKAAAASYLAEPPGSPTPGPFSYTKASVVLFLPNPRPNIFKLHSKEQLAECHQYLQSNMRWDFSFAIKTRMLFLPCSDNV.

This is an uncharacterized protein from Homo sapiens (Human).